We begin with the raw amino-acid sequence, 118 residues long: Small ribosomal subunit protein uS13 (118 aa).

Residues glycine 94–lysine 118 are disordered.

The protein belongs to the universal ribosomal protein uS13 family. As to quaternary structure, part of the 30S ribosomal subunit. Forms a loose heterodimer with protein S19. Forms two bridges to the 50S subunit in the 70S ribosome.

Located at the top of the head of the 30S subunit, it contacts several helices of the 16S rRNA. In the 70S ribosome it contacts the 23S rRNA (bridge B1a) and protein L5 of the 50S subunit (bridge B1b), connecting the 2 subunits; these bridges are implicated in subunit movement. Contacts the tRNAs in the A and P-sites. The sequence is that of Small ribosomal subunit protein uS13 from Tolumonas auensis (strain DSM 9187 / NBRC 110442 / TA 4).